Here is a 439-residue protein sequence, read N- to C-terminus: Ribosomal protein uS12 methylthiotransferase RimO (439 aa).

Residues 5-115 (PKIGFVSLGC…LIEAVHTHAP (111 aa)) enclose the MTTase N-terminal domain. The [4Fe-4S] cluster site is built by C14, C50, C79, C146, C150, and C153. In terms of domain architecture, Radical SAM core spans 132–369 (LTPRHYSYLK…MGLQAQISAD (238 aa)). The TRAM domain occupies 372–439 (QRFVGTEQQV…ESTEYDLIAD (68 aa)).

The protein belongs to the methylthiotransferase family. RimO subfamily. The cofactor is [4Fe-4S] cluster.

The protein localises to the cytoplasm. The enzyme catalyses L-aspartate(89)-[ribosomal protein uS12]-hydrogen + (sulfur carrier)-SH + AH2 + 2 S-adenosyl-L-methionine = 3-methylsulfanyl-L-aspartate(89)-[ribosomal protein uS12]-hydrogen + (sulfur carrier)-H + 5'-deoxyadenosine + L-methionine + A + S-adenosyl-L-homocysteine + 2 H(+). Functionally, catalyzes the methylthiolation of an aspartic acid residue of ribosomal protein uS12. The polypeptide is Ribosomal protein uS12 methylthiotransferase RimO (Francisella philomiragia subsp. philomiragia (strain ATCC 25017 / CCUG 19701 / FSC 153 / O#319-036)).